A 644-amino-acid polypeptide reads, in one-letter code: Transcription factor cep-1 (644 aa).

Residues 223 to 418 (EKWMEIDVLK…NFCEREDAKQ (196 aa)) mediate DNA binding. Positions 307, 310, 361, and 365 each coordinate Zn(2+). The segment at 528–555 (TNYSFRTLTLSTAEYTKVVEFLAREAKV) is required for tertiary structure stability of the protein.

Belongs to the p53 family. Homodimer. Interacts (via C-terminus domain) with prmt-5; not methylated by prmt-5. Interacts with cbp-1 (via HAT domain); cep-1 transcriptional activity may be inhibited by interaction with methylated cbp-1. Component of a complex that contains prmt-5 and cbp-1. Interacts with ape-1; the interaction inhibits pro-apoptotic activity of cep-1. Requires Zn(2+) as cofactor. Post-translationally, phosphorylated in response to IR-induced DNA damage which is thought to be mediated by akt-1. As to expression, expressed in pharyngeal muscle and neurons.

The protein resides in the nucleus. Its function is as follows. Transcriptional activator that binds the same DNA consensus sequence as p53. Has a role in normal development to ensure proper meiotic chromosome segregation. Promotes apoptosis under conditions of cellular and genotoxic stress in response to DNA damage, hypoxia, or starvation. Regulates germline apoptosis in response to DNA damage. Its pro-apoptotic activity is inhibited when bound to ape-1 in vitro. Plays a role in cell cycle arrest in the germline in response to DNA damage by UV-C light. However, not required for survival in response to DNA damage induced by UV-C light, indicating that it is unlikely to be involved in DNA repair. Required for induction of ced-13 in response to DNA damage. Regulates DNA damage-induced apoptosis by inducing transcription of the programmed cell death activator egl-1. Regulates germline proliferation by activating phg-1. Modulates lifespan. This chain is Transcription factor cep-1, found in Caenorhabditis elegans.